The chain runs to 209 residues: Uracil phosphoribosyltransferase (209 aa).

Residues arginine 77, arginine 102, and 129–137 contribute to the 5-phospho-alpha-D-ribose 1-diphosphate site; that span reads DPMLATGVS. Residues isoleucine 192 and 197 to 199 each bind uracil; that span reads GDA. Aspartate 198 lines the 5-phospho-alpha-D-ribose 1-diphosphate pocket.

This sequence belongs to the UPRTase family. Mg(2+) is required as a cofactor.

The catalysed reaction is UMP + diphosphate = 5-phospho-alpha-D-ribose 1-diphosphate + uracil. The protein operates within pyrimidine metabolism; UMP biosynthesis via salvage pathway; UMP from uracil: step 1/1. Its activity is regulated as follows. Allosterically activated by GTP. Its function is as follows. Catalyzes the conversion of uracil and 5-phospho-alpha-D-ribose 1-diphosphate (PRPP) to UMP and diphosphate. The polypeptide is Uracil phosphoribosyltransferase (Metamycoplasma arthritidis (strain 158L3-1) (Mycoplasma arthritidis)).